The sequence spans 142 residues: Large ribosomal subunit protein uL13 (142 aa).

The protein belongs to the universal ribosomal protein uL13 family. Part of the 50S ribosomal subunit.

Its function is as follows. This protein is one of the early assembly proteins of the 50S ribosomal subunit, although it is not seen to bind rRNA by itself. It is important during the early stages of 50S assembly. The protein is Large ribosomal subunit protein uL13 of Shigella sonnei (strain Ss046).